Reading from the N-terminus, the 599-residue chain is NADH-ubiquinone oxidoreductase chain 5 (599 aa).

A run of 16 helical transmembrane segments spans residues 1–21, 28–48, 81–101, 115–135, 171–191, 193–213, 233–253, 265–285, 302–322, 323–343, 363–383, 398–420, 455–475, 481–501, 510–530, and 577–597; these read MLEL…IFLF, FAES…ILLM, CFFV…FYYM, GLFL…QLLI, GDIG…DWSF, GLYA…LAAA, TPVS…FLLI, IQLM…ICAL, LGLM…FLHI, CMHA…IHGL, SVCF…AGFF, NSWA…VRLL, VIAG…CLSL, LAAV…VNLL, IPEL…HKLI, and LIKM…GIMI.

Belongs to the complex I subunit 5 family.

Its subcellular location is the mitochondrion inner membrane. It catalyses the reaction a ubiquinone + NADH + 5 H(+)(in) = a ubiquinol + NAD(+) + 4 H(+)(out). Core subunit of the mitochondrial membrane respiratory chain NADH dehydrogenase (Complex I) that is believed to belong to the minimal assembly required for catalysis. Complex I functions in the transfer of electrons from NADH to the respiratory chain. The immediate electron acceptor for the enzyme is believed to be ubiquinone. This is NADH-ubiquinone oxidoreductase chain 5 (ND5) from Branchiostoma floridae (Florida lancelet).